Here is a 728-residue protein sequence, read N- to C-terminus: Phosphoribosylformylglycinamidine synthase subunit PurL (728 aa).

Residue His42 is part of the active site. ATP contacts are provided by Tyr45 and Lys84. Position 86 (Glu86) interacts with Mg(2+). Residues 87–90 (SHNH) and Arg109 contribute to the substrate site. His88 functions as the Proton acceptor in the catalytic mechanism. Asp110 serves as a coordination point for Mg(2+). Gln237 serves as a coordination point for substrate. Position 265 (Asp265) interacts with Mg(2+). 309–311 (ESQ) contributes to the substrate binding site. Asp491 and Gly528 together coordinate ATP. Asn529 contributes to the Mg(2+) binding site. Ser531 contributes to the substrate binding site.

It belongs to the FGAMS family. Monomer. Part of the FGAM synthase complex composed of 1 PurL, 1 PurQ and 2 PurS subunits.

The protein localises to the cytoplasm. It carries out the reaction N(2)-formyl-N(1)-(5-phospho-beta-D-ribosyl)glycinamide + L-glutamine + ATP + H2O = 2-formamido-N(1)-(5-O-phospho-beta-D-ribosyl)acetamidine + L-glutamate + ADP + phosphate + H(+). It participates in purine metabolism; IMP biosynthesis via de novo pathway; 5-amino-1-(5-phospho-D-ribosyl)imidazole from N(2)-formyl-N(1)-(5-phospho-D-ribosyl)glycinamide: step 1/2. Its function is as follows. Part of the phosphoribosylformylglycinamidine synthase complex involved in the purines biosynthetic pathway. Catalyzes the ATP-dependent conversion of formylglycinamide ribonucleotide (FGAR) and glutamine to yield formylglycinamidine ribonucleotide (FGAM) and glutamate. The FGAM synthase complex is composed of three subunits. PurQ produces an ammonia molecule by converting glutamine to glutamate. PurL transfers the ammonia molecule to FGAR to form FGAM in an ATP-dependent manner. PurS interacts with PurQ and PurL and is thought to assist in the transfer of the ammonia molecule from PurQ to PurL. This is Phosphoribosylformylglycinamidine synthase subunit PurL from Campylobacter jejuni subsp. jejuni serotype O:6 (strain 81116 / NCTC 11828).